The sequence spans 999 residues: Disks large-associated protein 1 (999 aa).

Disordered regions lie at residues 155 to 213 (HSLE…GYWS), 395 to 418 (MAED…ARRA), and 918 to 989 (NWRP…DSIE). Positions 194-204 (RERCKSAEPKN) are enriched in basic and acidic residues. Composition is skewed to basic and acidic residues over residues 923 to 932 (DPPERKERRL) and 947 to 965 (LARD…EARK). A compositionally biased stretch (polar residues) spans 976–985 (VRQNSATESA). Positions 997 to 999 (TRL) match the PDZ-binding motif.

The protein belongs to the SAPAP family.

The protein localises to the cell membrane. It localises to the postsynaptic density. Its subcellular location is the synapse. Part of the postsynaptic scaffold in neuronal cells. This is Disks large-associated protein 1 from Danio rerio (Zebrafish).